A 70-amino-acid chain; its full sequence is Conotoxin ArMKLT2-0111 (70 aa).

Residues 1 to 22 (MKLTCVLIIAVLFLTACQLTTG) form the signal peptide. A propeptide spanning residues 23 to 40 (EQKDHALRSTDKNSKLTR) is cleaved from the precursor. The residue at position 41 (Gln-41) is a Pyrrolidone carboxylic acid. 3 cysteine pairs are disulfide-bonded: Cys-42-Cys-56, Cys-49-Cys-60, and Cys-55-Cys-67.

Belongs to the conotoxin O1 superfamily. In terms of tissue distribution, expressed by the venom duct.

It is found in the secreted. The sequence is that of Conotoxin ArMKLT2-0111 from Conus arenatus (Sand-dusted cone).